Here is a 274-residue protein sequence, read N- to C-terminus: Formamidopyrimidine-DNA glycosylase (274 aa).

Pro2 (schiff-base intermediate with DNA) is an active-site residue. The active-site Proton donor is Glu3. Lys56 (proton donor; for beta-elimination activity) is an active-site residue. DNA contacts are provided by His89, Arg107, and Lys148. The FPG-type zinc-finger motif lies at 233–267 (LAYGRAREMCVNCETTLENLKLGQRASVFCPQCQP). The active-site Proton donor; for delta-elimination activity is Arg257.

Belongs to the FPG family. Monomer. It depends on Zn(2+) as a cofactor.

The catalysed reaction is Hydrolysis of DNA containing ring-opened 7-methylguanine residues, releasing 2,6-diamino-4-hydroxy-5-(N-methyl)formamidopyrimidine.. The enzyme catalyses 2'-deoxyribonucleotide-(2'-deoxyribose 5'-phosphate)-2'-deoxyribonucleotide-DNA = a 3'-end 2'-deoxyribonucleotide-(2,3-dehydro-2,3-deoxyribose 5'-phosphate)-DNA + a 5'-end 5'-phospho-2'-deoxyribonucleoside-DNA + H(+). Its function is as follows. Involved in base excision repair of DNA damaged by oxidation or by mutagenic agents. Acts as a DNA glycosylase that recognizes and removes damaged bases. Has a preference for oxidized purines, such as 7,8-dihydro-8-oxoguanine (8-oxoG). Has AP (apurinic/apyrimidinic) lyase activity and introduces nicks in the DNA strand. Cleaves the DNA backbone by beta-delta elimination to generate a single-strand break at the site of the removed base with both 3'- and 5'-phosphates. This Acinetobacter baumannii (strain SDF) protein is Formamidopyrimidine-DNA glycosylase.